Reading from the N-terminus, the 82-residue chain is Turripeptide IX-07 (82 aa).

The N-terminal stretch at 1–21 is a signal peptide; it reads MGFYMLLTVALLLTSLMNVEA. The propeptide occupies 22–39; the sequence is TPVNQAERSALEKSGLGN. Disulfide bonds link Cys-48-Cys-70, Cys-55-Cys-74, and Cys-60-Cys-81.

Expressed by the venom duct.

The protein resides in the secreted. This Gemmula speciosa (Splendid gem-turris) protein is Turripeptide IX-07.